A 407-amino-acid polypeptide reads, in one-letter code: Elongation factor Tu (407 aa).

The tr-type G domain maps to 10-217 (KPHVNVGTIG…TLDEYIPEPE (208 aa)). The segment at 19–26 (GHVDHGKT) is G1. 19–26 (GHVDHGKT) is a GTP binding site. Thr26 contacts Mg(2+). Residues 60–64 (GITIA) are G2. Positions 81–84 (DCPG) are G3. GTP contacts are provided by residues 81 to 85 (DCPGH) and 136 to 139 (NKAD). A G4 region spans residues 136–139 (NKAD). Positions 184–186 (SAL) are G5.

Belongs to the TRAFAC class translation factor GTPase superfamily. Classic translation factor GTPase family. EF-Tu/EF-1A subfamily. In terms of assembly, monomer.

The protein localises to the cytoplasm. The enzyme catalyses GTP + H2O = GDP + phosphate + H(+). GTP hydrolase that promotes the GTP-dependent binding of aminoacyl-tRNA to the A-site of ribosomes during protein biosynthesis. This is Elongation factor Tu from Teredinibacter turnerae (strain ATCC 39867 / T7901).